The chain runs to 122 residues: Small ribosomal subunit protein bS6 (122 aa).

It belongs to the bacterial ribosomal protein bS6 family.

Binds together with bS18 to 16S ribosomal RNA. The polypeptide is Small ribosomal subunit protein bS6 (Vibrio cholerae serotype O1 (strain ATCC 39541 / Classical Ogawa 395 / O395)).